The sequence spans 65 residues: Large ribosomal subunit protein bL35 (65 aa).

It belongs to the bacterial ribosomal protein bL35 family.

This Proteus mirabilis (strain HI4320) protein is Large ribosomal subunit protein bL35.